A 393-amino-acid chain; its full sequence is Glutamate 5-kinase (393 aa).

An ATP-binding site is contributed by Lys-17. Residues Ser-57, Asp-144, and Asn-156 each coordinate substrate. 176 to 177 (SD) provides a ligand contact to ATP. The region spanning 282–359 (AGSIAIDAGA…AEIAAILGYA (78 aa)) is the PUA domain. The interval 374 to 393 (APSGARSEEGGNEKKGKLHA) is disordered. Over residues 379–393 (RSEEGGNEKKGKLHA) the composition is skewed to basic and acidic residues.

The protein belongs to the glutamate 5-kinase family.

It is found in the cytoplasm. It catalyses the reaction L-glutamate + ATP = L-glutamyl 5-phosphate + ADP. It participates in amino-acid biosynthesis; L-proline biosynthesis; L-glutamate 5-semialdehyde from L-glutamate: step 1/2. In terms of biological role, catalyzes the transfer of a phosphate group to glutamate to form L-glutamate 5-phosphate. The protein is Glutamate 5-kinase of Sinorhizobium fredii (strain NBRC 101917 / NGR234).